The primary structure comprises 377 residues: Progesterone receptor (377 aa).

The tract at residues 1 to 15 (EASQSPQYSFESLPQ) is modulating, Pro-Rich. The segment at residues 16–90 (KICLICGDEA…AGMVLGGRKF (75 aa)) is a DNA-binding region (nuclear receptor). 2 consecutive NR C4-type zinc fingers follow at residues 18–38 (CLIC…CGSC) and 54–78 (CAGR…LRKC). S127 bears the Phosphoserine mark. Residues 130–364 (QDLQLIPPLI…EFPEMMSEVI (235 aa)) enclose the NR LBD domain. An AF2; mediates transcriptional activation region spans residues 138–377 (LINLLMSIEP…LPKILAGMVK (240 aa)).

It belongs to the nuclear hormone receptor family. NR3 subfamily. In terms of assembly, interacts with CUEDC2, SMARD1 and with UNC45A. Interacts with PRMT2. Interacts with NCOA2 and NCOA1. Interacts with KLF9. Interacts with GTF2B. Post-translationally, palmitoylated by ZDHHC7 and ZDHHC21. Palmitoylation is required for plasma membrane targeting and for rapid intracellular signaling via ERK and AKT kinases and cAMP generation.

The protein resides in the nucleus. In terms of biological role, the steroid hormones and their receptors are involved in the regulation of eukaryotic gene expression and affect cellular proliferation and differentiation in target tissues. Transcriptional activator of several progesteron-dependent promoters in a variety of cell types. Involved in activation of SRC-dependent MAPK signaling on hormone stimulation. This is Progesterone receptor (PGR) from Ovis aries (Sheep).